A 434-amino-acid chain; its full sequence is MAKADIARRVYNHAWKLDPIVRSLLDTDFYKLLMLQMIWKLYPDVDVTFTLINRTTSVRIADEIDEAELRAQLDHVRTLGISKKELIWLAGNSFYGRTQIFEPEFLAWLSAIRLPAYELSKRDGQYELTFRGRWMETTLWEIPALAIINELRSRAALKSLGYFTLDVIYARAKAKMWEKVERLKQLPGLRISDFGTRRRHSFLWQRWCVEALKEGIGEAFTGTSNVLLAMDSDLEAVGTNAHELPMVAAALAKTDAELANAPYKVLQDWNTLYNGNLLIVLPDAFGTSAFLRDAPPWVADWTGFRPDSAPPIEGGERIIAWWEKMGRDPRQKLLIFSDGLDVDAIIDTYRHFEGRVRMSFGWGTNLTNDFIGCAPHDIAGLKPISIVCKITEANGRPAVKLSDNPLKATGEPAEVERYLKFFGSEDRVEHAVKV.

Position 242 is a phosphohistidine; by autocatalysis (His242).

Belongs to the NAPRTase family. In terms of processing, transiently phosphorylated on a His residue during the reaction cycle. Phosphorylation strongly increases the affinity for substrates and increases the rate of nicotinate D-ribonucleotide production. Dephosphorylation regenerates the low-affinity form of the enzyme, leading to product release.

It catalyses the reaction nicotinate + 5-phospho-alpha-D-ribose 1-diphosphate + ATP + H2O = nicotinate beta-D-ribonucleotide + ADP + phosphate + diphosphate. The protein operates within cofactor biosynthesis; NAD(+) biosynthesis; nicotinate D-ribonucleotide from nicotinate: step 1/1. Functionally, catalyzes the synthesis of beta-nicotinate D-ribonucleotide from nicotinate and 5-phospho-D-ribose 1-phosphate at the expense of ATP. The polypeptide is Nicotinate phosphoribosyltransferase (Allorhizobium ampelinum (strain ATCC BAA-846 / DSM 112012 / S4) (Agrobacterium vitis (strain S4))).